Here is a 260-residue protein sequence, read N- to C-terminus: Methylphosphonate hydroxylase (260 aa).

Lysine 107 contacts 2-oxoglutarate. Histidine 117, aspartate 119, and histidine 195 together coordinate Fe cation.

The protein belongs to the PhyH family. The cofactor is Fe(2+).

It catalyses the reaction methylphosphonate + 2-oxoglutarate + O2 = hydroxymethylphosphonate + succinate + CO2. Part of an oxidative pathway for utilization of methylphosphonic acid as a phosphate source. Catalyzes the conversion of methylphosphonic acid to hydroxymethylphosphonic acid. Is specific for the hydroxylation of methylphosphonate. This Gimesia maris (strain ATCC 29201 / DSM 8797 / 534-30) (Planctomyces maris) protein is Methylphosphonate hydroxylase.